The following is a 140-amino-acid chain: Putative pre-16S rRNA nuclease (140 aa).

Belongs to the YqgF nuclease family.

It localises to the cytoplasm. Its function is as follows. Could be a nuclease involved in processing of the 5'-end of pre-16S rRNA. This is Putative pre-16S rRNA nuclease from Aeromonas salmonicida (strain A449).